A 175-amino-acid chain; its full sequence is 6,7-dimethyl-8-ribityllumazine synthase (175 aa).

5-amino-6-(D-ribitylamino)uracil is bound by residues Phe24, Ala58–Glu60, and Ala82–Ile84. Glu87–Thr88 serves as a coordination point for (2S)-2-hydroxy-3-oxobutyl phosphate. His90 functions as the Proton donor in the catalytic mechanism. Residue Asn115 coordinates 5-amino-6-(D-ribitylamino)uracil. Residue Arg129 participates in (2S)-2-hydroxy-3-oxobutyl phosphate binding. The tract at residues Ala150 to Arg175 is disordered. The segment covering Glu152–Arg175 has biased composition (acidic residues).

This sequence belongs to the DMRL synthase family.

It catalyses the reaction (2S)-2-hydroxy-3-oxobutyl phosphate + 5-amino-6-(D-ribitylamino)uracil = 6,7-dimethyl-8-(1-D-ribityl)lumazine + phosphate + 2 H2O + H(+). It participates in cofactor biosynthesis; riboflavin biosynthesis; riboflavin from 2-hydroxy-3-oxobutyl phosphate and 5-amino-6-(D-ribitylamino)uracil: step 1/2. Functionally, catalyzes the formation of 6,7-dimethyl-8-ribityllumazine by condensation of 5-amino-6-(D-ribitylamino)uracil with 3,4-dihydroxy-2-butanone 4-phosphate. This is the penultimate step in the biosynthesis of riboflavin. This Bordetella bronchiseptica (strain ATCC BAA-588 / NCTC 13252 / RB50) (Alcaligenes bronchisepticus) protein is 6,7-dimethyl-8-ribityllumazine synthase.